The primary structure comprises 642 residues: Threonine--tRNA ligase (642 aa).

In terms of domain architecture, TGS spans 1–61 (MPVITLPDGS…ETDAELSIIT (61 aa)). A catalytic region spans residues 243 to 534 (DHRKIGKQLD…LIEEYAGRFP (292 aa)). The Zn(2+) site is built by Cys334, His385, and His511.

Belongs to the class-II aminoacyl-tRNA synthetase family. As to quaternary structure, homodimer. It depends on Zn(2+) as a cofactor.

The protein localises to the cytoplasm. It carries out the reaction tRNA(Thr) + L-threonine + ATP = L-threonyl-tRNA(Thr) + AMP + diphosphate + H(+). Catalyzes the attachment of threonine to tRNA(Thr) in a two-step reaction: L-threonine is first activated by ATP to form Thr-AMP and then transferred to the acceptor end of tRNA(Thr). Also edits incorrectly charged L-seryl-tRNA(Thr). The sequence is that of Threonine--tRNA ligase from Shewanella sp. (strain MR-7).